The sequence spans 677 residues: Transmembrane and coiled-coil domain-containing protein 3 (677 aa).

Positions 1 to 22 (MKVLGRSFFWVLFPVLPWAVQA) are cleaved as a signal peptide. Positions 124 to 204 (DYKDVVNMKE…EEEIEEHAFD (81 aa)) form a coiled coil. Asn206 and Asn230 each carry an N-linked (GlcNAc...) asparagine glycan. A run of 10 helical transmembrane segments spans residues 286–306 (WLCT…GVLL), 317–337 (IVQV…LVGL), 350–370 (ISLQ…LLWG), 416–436 (VLLG…AVMP), 456–476 (ILVL…LCLV), 498–518 (EILI…TELL), 554–574 (FLAI…FVAY), 578–598 (VLVF…ALVL), 608–628 (YIKW…FVLG), and 640–660 (EVYL…PVLW).

It belongs to the monovalent cation:proton antiporter 2 (CPA2) transporter (TC 2.A.37) family. In terms of tissue distribution, expressed in the cornea, lens capsule and choroid-retinal pigment epithelium (at protein level).

It localises to the membrane. Probable Na(+)/H(+) antiporter. The polypeptide is Transmembrane and coiled-coil domain-containing protein 3 (TMCO3) (Homo sapiens (Human)).